Here is a 466-residue protein sequence, read N- to C-terminus: Glutamate--tRNA ligase (466 aa).

A 'HIGH' region motif is present at residues 11–21; sequence PSPTGFIHLGN. The short motif at 243 to 247 is the 'KMSKS' region element; that stretch reads KMSKR. Residue Lys246 coordinates ATP.

It belongs to the class-I aminoacyl-tRNA synthetase family. Glutamate--tRNA ligase type 1 subfamily. In terms of assembly, monomer.

It is found in the cytoplasm. It carries out the reaction tRNA(Glu) + L-glutamate + ATP = L-glutamyl-tRNA(Glu) + AMP + diphosphate. Catalyzes the attachment of glutamate to tRNA(Glu) in a two-step reaction: glutamate is first activated by ATP to form Glu-AMP and then transferred to the acceptor end of tRNA(Glu). This chain is Glutamate--tRNA ligase, found in Cupriavidus taiwanensis (strain DSM 17343 / BCRC 17206 / CCUG 44338 / CIP 107171 / LMG 19424 / R1) (Ralstonia taiwanensis (strain LMG 19424)).